The following is a 292-amino-acid chain: Putative xanthine dehydrogenase FAD-binding subunit XdhB (292 aa).

The region spanning 1–176 (MFDFASYHRA…VAFHFPPQPK (176 aa)) is the FAD-binding PCMH-type domain. Residues 27–34 (KLLAGGTD), 109–113 (ATYGG), isoleucine 165, and phenylalanine 184 contribute to the FAD site.

Heterotrimer of XdhA, XdhB and XdhC. Requires FAD as cofactor.

It carries out the reaction xanthine + NAD(+) + H2O = urate + NADH + H(+). The enzyme catalyses hypoxanthine + NAD(+) + H2O = xanthine + NADH + H(+). It functions in the pathway purine metabolism; hypoxanthine degradation; urate from hypoxanthine: step 1/2. It participates in purine metabolism; hypoxanthine degradation; urate from hypoxanthine: step 2/2. In terms of biological role, presumed to be a dehydrogenase, but possibly an oxidase. Participates in limited purine salvage (requires aspartate) but does not support aerobic growth on purines as the sole carbon source (purine catabolism). The protein is Putative xanthine dehydrogenase FAD-binding subunit XdhB (xdhB) of Escherichia coli (strain K12).